The following is a 212-amino-acid chain: Methylthioribulose-1-phosphate dehydratase (212 aa).

Residues H97 and H99 each coordinate Zn(2+).

The protein belongs to the aldolase class II family. MtnB subfamily. In terms of assembly, homotetramer. It depends on Zn(2+) as a cofactor.

It catalyses the reaction 5-(methylsulfanyl)-D-ribulose 1-phosphate = 5-methylsulfanyl-2,3-dioxopentyl phosphate + H2O. The protein operates within amino-acid biosynthesis; L-methionine biosynthesis via salvage pathway; L-methionine from S-methyl-5-thio-alpha-D-ribose 1-phosphate: step 2/6. Functionally, catalyzes the dehydration of methylthioribulose-1-phosphate (MTRu-1-P) into 2,3-diketo-5-methylthiopentyl-1-phosphate (DK-MTP-1-P). In Bacillus cereus (strain AH187), this protein is Methylthioribulose-1-phosphate dehydratase.